The chain runs to 360 residues: Photosystem II protein D1 (360 aa).

The next 3 helical transmembrane spans lie at 29–46 (YIGW…TATS), 118–133 (HFLL…EWEL), and 142–156 (WISV…AAAA). His-118 is a binding site for chlorophyll a. Tyr-126 serves as a coordination point for pheophytin a. 2 residues coordinate [CaMn4O5] cluster: Asp-170 and Glu-189. The helical transmembrane segment at 197 to 218 (FHQLGVAGVFGGSLFSAMHGSL) threads the bilayer. Position 198 (His-198) interacts with chlorophyll a. A quinone-binding positions include His-215 and 264 to 265 (SF). A Fe cation-binding site is contributed by His-215. His-272 serves as a coordination point for Fe cation. The helical transmembrane segment at 274-288 (FLGAWPVVGIWLTSM) threads the bilayer. 4 residues coordinate [CaMn4O5] cluster: His-332, Glu-333, Asp-342, and Ala-344. A propeptide spanning residues 345 to 360 (SGDSCPVALVAPSING) is cleaved from the precursor.

It belongs to the reaction center PufL/M/PsbA/D family. PSII is composed of 1 copy each of membrane proteins PsbA, PsbB, PsbC, PsbD, PsbE, PsbF, PsbH, PsbI, PsbJ, PsbK, PsbL, PsbM, PsbT, PsbX, PsbY, PsbZ, Psb30/Ycf12, at least 3 peripheral proteins of the oxygen-evolving complex and a large number of cofactors. It forms dimeric complexes. Requires The D1/D2 heterodimer binds P680, chlorophylls that are the primary electron donor of PSII, and subsequent electron acceptors. It shares a non-heme iron and each subunit binds pheophytin, quinone, additional chlorophylls, carotenoids and lipids. D1 provides most of the ligands for the Mn4-Ca-O5 cluster of the oxygen-evolving complex (OEC). There is also a Cl(-1) ion associated with D1 and D2, which is required for oxygen evolution. The PSII complex binds additional chlorophylls, carotenoids and specific lipids. as cofactor. Post-translationally, tyr-161 forms a radical intermediate that is referred to as redox-active TyrZ, YZ or Y-Z. In terms of processing, C-terminally processed by CTPA; processing is essential to allow assembly of the oxygen-evolving complex and thus photosynthetic growth.

Its subcellular location is the plastid. The protein resides in the chloroplast thylakoid membrane. It catalyses the reaction 2 a plastoquinone + 4 hnu + 2 H2O = 2 a plastoquinol + O2. In terms of biological role, photosystem II (PSII) is a light-driven water:plastoquinone oxidoreductase that uses light energy to abstract electrons from H(2)O, generating O(2) and a proton gradient subsequently used for ATP formation. It consists of a core antenna complex that captures photons, and an electron transfer chain that converts photonic excitation into a charge separation. The D1/D2 (PsbA/PsbD) reaction center heterodimer binds P680, the primary electron donor of PSII as well as several subsequent electron acceptors. This is Photosystem II protein D1 from Palmaria palmata (Dulse).